Here is a 385-residue protein sequence, read N- to C-terminus: ATP phosphoribosyltransferase regulatory subunit (385 aa).

Belongs to the class-II aminoacyl-tRNA synthetase family. HisZ subfamily. In terms of assembly, heteromultimer composed of HisG and HisZ subunits.

Its subcellular location is the cytoplasm. It functions in the pathway amino-acid biosynthesis; L-histidine biosynthesis; L-histidine from 5-phospho-alpha-D-ribose 1-diphosphate: step 1/9. Its function is as follows. Required for the first step of histidine biosynthesis. May allow the feedback regulation of ATP phosphoribosyltransferase activity by histidine. The chain is ATP phosphoribosyltransferase regulatory subunit from Bordetella pertussis (strain Tohama I / ATCC BAA-589 / NCTC 13251).